A 304-amino-acid chain; its full sequence is Methionyl-tRNA formyltransferase (304 aa).

A (6S)-5,6,7,8-tetrahydrofolate-binding site is contributed by 106–109; that stretch reads SLLP.

It belongs to the Fmt family.

It carries out the reaction L-methionyl-tRNA(fMet) + (6R)-10-formyltetrahydrofolate = N-formyl-L-methionyl-tRNA(fMet) + (6S)-5,6,7,8-tetrahydrofolate + H(+). Functionally, attaches a formyl group to the free amino group of methionyl-tRNA(fMet). The formyl group appears to play a dual role in the initiator identity of N-formylmethionyl-tRNA by promoting its recognition by IF2 and preventing the misappropriation of this tRNA by the elongation apparatus. The polypeptide is Methionyl-tRNA formyltransferase (Thermosipho africanus (strain TCF52B)).